Reading from the N-terminus, the 173-residue chain is Co-chaperone protein HscB homolog (173 aa).

In terms of domain architecture, J spans Cys5–Ile77.

Belongs to the HscB family. As to quaternary structure, interacts with HscA and stimulates its ATPase activity.

In terms of biological role, co-chaperone involved in the maturation of iron-sulfur cluster-containing proteins. Seems to help targeting proteins to be folded toward HscA. The polypeptide is Co-chaperone protein HscB homolog (Pseudomonas putida (strain GB-1)).